A 963-amino-acid chain; its full sequence is IQ motif and SEC7 domain-containing protein 1 (963 aa).

A disordered region spans residues 21-88; sequence SGVEGEAPSS…TRRPKLQHST (68 aa). The span at 29 to 38 shows a compositional bias: polar residues; sequence SSETGTSLDS. Phosphoserine is present on residues Ser-89, Ser-105, and Ser-107. In terms of domain architecture, IQ spans 134–163; sequence TRHAARTIQTAFRQYQMNKNFERLRSSMSE. Phosphoserine is present on residues Ser-180, Ser-249, and Ser-253. Disordered stretches follow at residues 312-332 and 349-513; these read LSPP…ESDL and KEDK…RNSW. 2 stretches are compositionally biased toward basic and acidic residues: residues 366–376 and 430–446; these read ERQEQRLRVEH and LPRE…RPLD. The span at 471-489 shows a compositional bias: low complexity; that stretch reads DSINSTSNSNDTINCSSES. Phosphoserine is present on residues Ser-512 and Ser-515. The 194-residue stretch at 517 to 710 folds into the SEC7 domain; sequence AFSNDVIRKR…MGIYERIRKR (194 aa). Residues 774 to 866 form the PH domain; it reads HQREIFLFND…LRESIAEVQE (93 aa). Residues 848-879 adopt a coiled-coil conformation; it reads QDRKKFTDDLRESIAEVQEMEKHRIESELEKQ. Phosphoserine is present on Ser-892. Tyr-911 carries the phosphotyrosine modification. Positions 922–947 are disordered; sequence LSSSLRDLSEAGKRGRRSSAGSLESN. 2 positions are modified to phosphoserine: Ser-924 and Ser-925.

This sequence belongs to the BRAG family. Interacts with ARF1 and ARF6. Interacts with GRIA2; the interaction is required for ARF6 activation. Expressed in brain, ovary, heart, lung, liver, kidney and leukocytes. Moderate expression was also detected in lung, skeletal muscle, placenta, small intestine, pancreas, spleen and testis.

It is found in the cytoplasm. It localises to the nucleus. Its subcellular location is the postsynaptic density. The protein resides in the cytoplasmic vesicle. The protein localises to the secretory vesicle. It is found in the synaptic vesicle. Its function is as follows. Guanine nucleotide exchange factor for ARF1 and ARF6. Guanine nucleotide exchange factor activity is enhanced by lipid binding. Accelerates GTP binding by ARFs of all three classes. Guanine nucleotide exchange protein for ARF6, mediating internalization of beta-1 integrin. Involved in neuronal development. In neurons, plays a role in the control of vesicle formation by endocytoc cargo. Upon long term depression, interacts with GRIA2 and mediates the activation of ARF6 to internalize synaptic AMPAR receptors. This chain is IQ motif and SEC7 domain-containing protein 1, found in Homo sapiens (Human).